Consider the following 294-residue polypeptide: Nucleotide-binding protein Daud_0300 (294 aa).

Position 11 to 18 (11 to 18) interacts with ATP; sequence GLSGAGKT. 62 to 65 serves as a coordination point for GTP; the sequence is DIRG.

Belongs to the RapZ-like family.

Its function is as follows. Displays ATPase and GTPase activities. In Desulforudis audaxviator (strain MP104C), this protein is Nucleotide-binding protein Daud_0300.